The sequence spans 318 residues: Methionyl-tRNA formyltransferase (318 aa).

110–113 (SLLP) is a binding site for (6S)-5,6,7,8-tetrahydrofolate.

It belongs to the Fmt family.

It carries out the reaction L-methionyl-tRNA(fMet) + (6R)-10-formyltetrahydrofolate = N-formyl-L-methionyl-tRNA(fMet) + (6S)-5,6,7,8-tetrahydrofolate + H(+). Its function is as follows. Attaches a formyl group to the free amino group of methionyl-tRNA(fMet). The formyl group appears to play a dual role in the initiator identity of N-formylmethionyl-tRNA by promoting its recognition by IF2 and preventing the misappropriation of this tRNA by the elongation apparatus. This chain is Methionyl-tRNA formyltransferase, found in Ligilactobacillus salivarius (strain UCC118) (Lactobacillus salivarius).